A 495-amino-acid chain; its full sequence is Ferruginol synthase (495 aa).

Residue Met1 is a topological domain, lumenal. The helical transmembrane segment at 2-22 (DSFPLLAALFFIAATITFLSF) threads the bilayer. At 23 to 495 (RRRRNLPPGP…PLRIIPIVKS (473 aa)) the chain is on the cytoplasmic side. Cys437 contributes to the heme binding site.

The protein belongs to the cytochrome P450 family. It depends on heme as a cofactor. As to expression, expression is more abundant in the rhizome.

The protein localises to the endoplasmic reticulum membrane. The enzyme catalyses abieta-8,11,13-triene + reduced [NADPH--hemoprotein reductase] + O2 = ferruginol + oxidized [NADPH--hemoprotein reductase] + H2O + H(+). Its function is as follows. Cytochrome P450 enzyme (CYP) which catalyzes a unique two-electron oxidation cascade on abieta-8,11,13-triene to produce ferruginol, an intermediate in tanshinone biosynthesis. The sequence is that of Ferruginol synthase from Salvia miltiorrhiza (Chinese sage).